The primary structure comprises 477 residues: Alanine--glyoxylate aminotransferase 2 homolog 2, mitochondrial (477 aa).

The transit peptide at 1 to 22 (MQRFAAKRSVQNISVSLWRRCI) directs the protein to the mitochondrion. Pyridoxal 5'-phosphate-binding positions include 165–166 (GT), Tyr-192, and 292–295 (DEVQ). The residue at position 321 (Lys-321) is an N6-(pyridoxal phosphate)lysine. Thr-350 lines the pyridoxal 5'-phosphate pocket.

This sequence belongs to the class-III pyridoxal-phosphate-dependent aminotransferase family. Homotetramer. Interacts with GRF3. The cofactor is pyridoxal 5'-phosphate.

The protein resides in the mitochondrion. The enzyme catalyses glyoxylate + L-alanine = glycine + pyruvate. The chain is Alanine--glyoxylate aminotransferase 2 homolog 2, mitochondrial (AGT3) from Arabidopsis thaliana (Mouse-ear cress).